A 121-amino-acid chain; its full sequence is Large ribosomal subunit protein uL14 (121 aa).

This sequence belongs to the universal ribosomal protein uL14 family. As to quaternary structure, part of the 50S ribosomal subunit. Forms a cluster with proteins L3 and L19. In the 70S ribosome, L14 and L19 interact and together make contacts with the 16S rRNA in bridges B5 and B8.

Functionally, binds to 23S rRNA. Forms part of two intersubunit bridges in the 70S ribosome. The sequence is that of Large ribosomal subunit protein uL14 from Synechococcus sp. (strain CC9902).